The primary structure comprises 138 residues: Large ribosomal subunit protein uL16 (138 aa).

The segment covering 1–13 (MLQPKRRKYRKEQ) has biased composition (basic residues). The segment at 1–20 (MLQPKRRKYRKEQKGRNTGI) is disordered.

Belongs to the universal ribosomal protein uL16 family. As to quaternary structure, part of the 50S ribosomal subunit.

Its function is as follows. Binds 23S rRNA and is also seen to make contacts with the A and possibly P site tRNAs. This is Large ribosomal subunit protein uL16 from Burkholderia mallei (strain NCTC 10247).